The following is a 609-amino-acid chain: Leukotriene A-4 hydrolase (609 aa).

Residues 131–133 (QCQ) and 263–268 (PYGGME) each bind a peptide. His292 contacts Zn(2+). Glu293 functions as the Proton acceptor in the catalytic mechanism. Residues His296 and Glu315 each contribute to the Zn(2+) site. Residue Tyr380 is the Proton donor of the active site. An a peptide-binding site is contributed by 560-562 (RMK).

It belongs to the peptidase M1 family. As to quaternary structure, homodimer. It depends on Zn(2+) as a cofactor. As to expression, expressed in oocytes.

It localises to the cytoplasm. It catalyses the reaction Release of the N-terminal residue from a tripeptide.. It carries out the reaction leukotriene A4 + H2O = leukotriene B4. Its pathway is lipid metabolism; leukotriene B4 biosynthesis. Its activity is regulated as follows. The epoxide hydrolase activity is mildly restrained by suicide inactivation, possibly involving binding of LTA4 to Tyr-380. In terms of biological role, bifunctional zinc metalloenzyme that comprises both epoxide hydrolase (EH) and aminopeptidase activities. Acts as an epoxide hydrolase to catalyze the conversion of leukotriene A4 (LTA4) to the pro-inflammatory mediator leukotriene B4 (LTB4). During the conversion of LTA4 to LTB4, a second product is formed, the isomeric delta6-trans-delta8-cis-LTB4 (5S,12R-dihydroxy-6,10-trans-8,14-cis-eicosatetraenoic acid), with a relative formation of 10% delta6-trans-delta8-cis-LTB4 compared to 90% LTB4. The production of delta6-trans-delta8-cis-LTB4 seems to depend on the phenylalanine residue at position 375. Also has aminopeptidase activity. In Xenopus laevis (African clawed frog), this protein is Leukotriene A-4 hydrolase.